We begin with the raw amino-acid sequence, 303 residues long: Probable porphobilinogen deaminase (303 aa).

The residue at position 240 (cysteine 240) is an S-(dipyrrolylmethanemethyl)cysteine.

It belongs to the HMBS family. Requires dipyrromethane as cofactor.

It catalyses the reaction 4 porphobilinogen + H2O = hydroxymethylbilane + 4 NH4(+). It functions in the pathway porphyrin-containing compound metabolism; protoporphyrin-IX biosynthesis; coproporphyrinogen-III from 5-aminolevulinate: step 2/4. Its function is as follows. Tetrapolymerization of the monopyrrole PBG into the hydroxymethylbilane pre-uroporphyrinogen in several discrete steps. The polypeptide is Probable porphobilinogen deaminase (Hyperthermus butylicus (strain DSM 5456 / JCM 9403 / PLM1-5)).